Here is a 424-residue protein sequence, read N- to C-terminus: Histidine--tRNA ligase (424 aa).

This sequence belongs to the class-II aminoacyl-tRNA synthetase family. Homodimer.

It is found in the cytoplasm. It carries out the reaction tRNA(His) + L-histidine + ATP = L-histidyl-tRNA(His) + AMP + diphosphate + H(+). This is Histidine--tRNA ligase from Shigella flexneri.